A 299-amino-acid polypeptide reads, in one-letter code: RING-H2 finger protein ATL20 (299 aa).

The chain crosses the membrane as a helical span at residues 172 to 192 (LIITLCIIGGITATCIAAIRI). Residues 253–295 (CPICLSEYASKETVRCMPECDHCFHVQCIDEWLKIHSSCPVCR) form an RING-type; atypical zinc finger.

Belongs to the RING-type zinc finger family. ATL subfamily.

It is found in the membrane. The catalysed reaction is S-ubiquitinyl-[E2 ubiquitin-conjugating enzyme]-L-cysteine + [acceptor protein]-L-lysine = [E2 ubiquitin-conjugating enzyme]-L-cysteine + N(6)-ubiquitinyl-[acceptor protein]-L-lysine.. Its pathway is protein modification; protein ubiquitination. The protein is RING-H2 finger protein ATL20 (ATL20) of Arabidopsis thaliana (Mouse-ear cress).